Reading from the N-terminus, the 307-residue chain is Mycothiol acetyltransferase (307 aa).

2 N-acetyltransferase domains span residues 12 to 152 (TRTD…APIP) and 160 to 307 (VTLR…YQRS). Glutamate 43 contacts 1D-myo-inositol 2-(L-cysteinylamino)-2-deoxy-alpha-D-glucopyranoside. 87 to 89 (LAV) serves as a coordination point for acetyl-CoA. Glutamate 187, lysine 227, and glutamate 239 together coordinate 1D-myo-inositol 2-(L-cysteinylamino)-2-deoxy-alpha-D-glucopyranoside. Acetyl-CoA is bound by residues 243–245 (LGV) and 250–256 (HGGGLGK). Residue tyrosine 278 participates in 1D-myo-inositol 2-(L-cysteinylamino)-2-deoxy-alpha-D-glucopyranoside binding.

It belongs to the acetyltransferase family. MshD subfamily. As to quaternary structure, monomer.

It carries out the reaction 1D-myo-inositol 2-(L-cysteinylamino)-2-deoxy-alpha-D-glucopyranoside + acetyl-CoA = mycothiol + CoA + H(+). Catalyzes the transfer of acetyl from acetyl-CoA to desacetylmycothiol (Cys-GlcN-Ins) to form mycothiol. This Salinispora arenicola (strain CNS-205) protein is Mycothiol acetyltransferase.